The chain runs to 97 residues: Large ribosomal subunit protein eL21 (97 aa).

This sequence belongs to the eukaryotic ribosomal protein eL21 family.

This Methanococcus aeolicus (strain ATCC BAA-1280 / DSM 17508 / OCM 812 / Nankai-3) protein is Large ribosomal subunit protein eL21.